A 164-amino-acid polypeptide reads, in one-letter code: Small ribosomal subunit protein uS5 (164 aa).

Residues 10–73 form the S5 DRBM domain; the sequence is LEERVVAINR…EAAKKNLIEV (64 aa).

Belongs to the universal ribosomal protein uS5 family. Part of the 30S ribosomal subunit. Contacts proteins S4 and S8.

With S4 and S12 plays an important role in translational accuracy. Functionally, located at the back of the 30S subunit body where it stabilizes the conformation of the head with respect to the body. This is Small ribosomal subunit protein uS5 from Streptococcus thermophilus (strain CNRZ 1066).